Consider the following 384-residue polypeptide: Dual-specificity RNA methyltransferase RlmN (384 aa).

Glutamate 105 functions as the Proton acceptor in the catalytic mechanism. In terms of domain architecture, Radical SAM core spans glutamate 111–aspartate 350. Cysteines 118 and 355 form a disulfide. Residues cysteine 125, cysteine 129, and cysteine 132 each coordinate [4Fe-4S] cluster. Residues glycine 179 to glutamate 180, serine 211, serine 233 to histidine 235, and asparagine 312 contribute to the S-adenosyl-L-methionine site. The active-site S-methylcysteine intermediate is the cysteine 355.

It belongs to the radical SAM superfamily. RlmN family. [4Fe-4S] cluster is required as a cofactor.

Its subcellular location is the cytoplasm. The enzyme catalyses adenosine(2503) in 23S rRNA + 2 reduced [2Fe-2S]-[ferredoxin] + 2 S-adenosyl-L-methionine = 2-methyladenosine(2503) in 23S rRNA + 5'-deoxyadenosine + L-methionine + 2 oxidized [2Fe-2S]-[ferredoxin] + S-adenosyl-L-homocysteine. It carries out the reaction adenosine(37) in tRNA + 2 reduced [2Fe-2S]-[ferredoxin] + 2 S-adenosyl-L-methionine = 2-methyladenosine(37) in tRNA + 5'-deoxyadenosine + L-methionine + 2 oxidized [2Fe-2S]-[ferredoxin] + S-adenosyl-L-homocysteine. In terms of biological role, specifically methylates position 2 of adenine 2503 in 23S rRNA and position 2 of adenine 37 in tRNAs. m2A2503 modification seems to play a crucial role in the proofreading step occurring at the peptidyl transferase center and thus would serve to optimize ribosomal fidelity. The polypeptide is Dual-specificity RNA methyltransferase RlmN (Escherichia coli O6:H1 (strain CFT073 / ATCC 700928 / UPEC)).